Reading from the N-terminus, the 227-residue chain is MKRTKNINQETFRKSWRSYRLAPVALAVSAVFMLAGCEKTDETVSLYQNADDCSQANPSQSAECTTAYNTALQEAVKTAPKYATREDCVAEFGESQCTQAPAQAGMVPTSSSETTAAAPQQSGSMWMPLMAGYMMGRMMGGGASQPLFTSKAPNSPANGKFVDASGKNFGAATTGRTMTVPKTALAPKPAVTKTITRGGFGESVAKQSSMQRSAATSSKTTTRSMGG.

Positions 198–227 (GGFGESVAKQSSMQRSAATSSKTTTRSMGG) are disordered. Residues 212-227 (RSAATSSKTTTRSMGG) are compositionally biased toward low complexity.

It belongs to the UPF0441 family.

This is UPF0441 protein YPO0661/y3517/YP_2976 from Yersinia pestis.